The sequence spans 353 residues: Chorismate synthase (353 aa).

Arginine 48 contributes to the NADP(+) binding site. Residues arginine 125–serine 127, asparagine 238–alanine 239, glycine 278, lysine 293–serine 297, and arginine 319 each bind FMN.

The protein belongs to the chorismate synthase family. As to quaternary structure, homotetramer. FMNH2 serves as cofactor.

The enzyme catalyses 5-O-(1-carboxyvinyl)-3-phosphoshikimate = chorismate + phosphate. The protein operates within metabolic intermediate biosynthesis; chorismate biosynthesis; chorismate from D-erythrose 4-phosphate and phosphoenolpyruvate: step 7/7. Functionally, catalyzes the anti-1,4-elimination of the C-3 phosphate and the C-6 proR hydrogen from 5-enolpyruvylshikimate-3-phosphate (EPSP) to yield chorismate, which is the branch point compound that serves as the starting substrate for the three terminal pathways of aromatic amino acid biosynthesis. This reaction introduces a second double bond into the aromatic ring system. In Buchnera aphidicola subsp. Cinara cedri (strain Cc), this protein is Chorismate synthase.